The following is a 2467-amino-acid chain: MKVTVDVEADSPFLKALQKAFPAFEVESQQVTPNDHANARAFSHLATKLIEQEVPTGVTILDVGSAPARRLMSDHTYHCICPMKSAEDPERLANYARKLAKASGTVLDKNVSGKITDLQDVMATPDLESPTFCLHTDETCRTRAEVAVYQDVYAVHAPTSLYHQAIKGVRTAYWIGFDTTPFMFEALAGAYPAYSTNWADEQVLQARNIGLCATGLSEGRRGKLSIMRKKCLRPSDRVMFSVGSTLYTESRKLLRSWHLPSVFHLKGKNSFTCRCDTVVSCEGYVVKKITISPGIYGKTVDYAVTHHAEGFLVCKITDTVRGERVSFPVCTYVPATICDQMTGILATDVTPEDAQKLLVGLNQRIVVNGRTQRNTNTMKNYLLPVVAQAFSKWAREARADMEDEKPLGTRERTLTCCCLWAFKSHKIHTMYKRPETQTIVKVPSTFDSFVIPSLWSSSLSMGIRQRIKLLLSARMAQGLPYSGDRTEARAAEEEEKEAQEAELTRAALPPLVSGSCADDIAQVDVEELTFRAGAGVVETPRNALKVTPQAHDHLIGSYLILSPQTVLKSEKLAPIHPLAEQVTVMTHSGRSGRYPVDKYDGRVLIPTGAAIPVSEFQALSESATMVYNEREFINRKLHHIALYGPALNTDEESYEKVRAERAETEYVFDVDKKACIKKEEASGLVLTGDLINPPFHEFAYEGLKIRPAAPYHTTIIGVFGVPGSGKSAIIKNMVTTRDLVASGKKENCQEIMNDVKRQRGLDVTARTVDSILLNGCKRGVENLYVDEAFACHSGTLLALIALVRPSGKVVLCGDPKQCGFFNLMQLKVHYNHNICTRVLHKSISRRCTLPVTAIVSTLHYQGKMRTTNRCNTPIQIDTTGSSKPASGDIVLTCFRGWVKQLQIDYRGHEVMTAAASQGLTRKGVYAVRQKVNENPLYSPLSEHVNVLLTRTENRLVWKTLSGDPWIKVLTNVPRGDFSATLEEWQEEHDGIMRVLNERPAEVDPFQNKAKVCWAKCLVQVLETAGIRMTADEWNTILAFREDRAYSPEVALNEICTRYYGVDLDSGLFSAQSVSLFYENNHWDNRPGGRMYGFNHEVARKYAARFPFLRGNMNSGLQLNVPERKLQPFSAECNIVPSNRRLPHALVTSYQQCRGERVEWLLKKIPGHQMLLVSEYNLAIPHKRVFWIAPPRVSGADRTYDLDLGLPMDAGRYDLVFVNIHTEYRQHHYQQCVDHSMRLQMLGGDSLHLLRPGGSLLMRAYGYADRVSEMVVTALARKFSAFRVLRPACVTSNTEVFLLFSNFDNGRRAVTLHQANQKLSSMYACNGLHTAGCAPSYRVRRADISGHGEEAVVNAANAKGTVSDGVCRAVAKKWPSSFKGAATPVGTAKMIRADGMTVIHAVGPNFSTVTEAEGDRELAAAYRAVASIISTNNIKSVAVPLLSTGTFSGGKDRVMQSLNHLFTALDATDADVVIYCRDKNWEKKIQEAIDRRTAIELVSEDVTLETDLVRVHPDSCLVGRNGYSATDGKLYSYLEGTRFHQTAVDMAEISTLWPRLQDANEQICLYALGETMDSIRTKCPVEDADSSTPPKTVPCLCRYAMTAERVARLRMNNTKNIIVCSSFPLPKYRIEGVQKVKCDRVLIFDQTVPSLVSPRKYIQQPPEQLDNVSLTSTTSTGSAWSLPSETTYETMEVVAEVHTEPPIPPPRRRRAAVAQLRQDLEVTEEIEPYVIQQAEIMVMERVATTDIRAIPVPARRAITMPVPAPRVRKVATEPPSEPEAPIPAPRKRRTTSTTPPHNPGDFVPRVPVELPWEPEDLDIQFGDLEPRRRNTRDWDVSTGIQFGDIDFNQSXLGRAGAYIFSSDTGPGHLQQRSVRQHELPCETLYAHEDERIYPPAFDGEKEKILQAKMQMAPTEANKSRYQSRKVENMKALIVERLREGAKLYLHEQTDKVPTYTSKYPRPVYSPSVDDSLSNPEVAVAACNSFLEENYPTVANYQITDEYDAYLDLVDGSESCLDRATFCPAKLRCYPKHHAYHQPQIRSAVPSPFQNTLQNVLAAATKRNCNVTQMRELPTMDSAVFNVESFKKYACTGEYWQEFKDNPIRITTENITTYVAKLKGPKAAALFAKTHNLVPLQEVPMDRFVMDMKRDVKVTPGTKHTEERPKVQVIQAAEPLATAYLCGIHRELVRRLKAVLTPNIHTLFDMSAEDFDAIIAAHFQPGDAVLETDIASFDKSQDDSLALTALMLLEDLGVDQELLDLIEAAFGEITSVHLPTGTRFKFGAMMKSGMFLTLFINTLLNIVIACRVLRDKLSSSACAAFIGDDNIVHGVRSDPLMAERCASWVNMEVKIIDATMCEKPPYFCGGFILYDSVAGTACRVADPLKRLFKLGKPLPADDNQDEDRRRALKDETVKWSRIGLREELDVALSSRYQVSGVGNITRAMSTLSKNLKSFRKIRGPIIHLYGGPK.

The region spanning 27–258 is the Alphavirus-like MT domain; the sequence is ESQQVTPNDH…ESRKLLRSWH (232 aa). Positions 243-262 are nsP1 membrane-binding; sequence GSTLYTESRKLLRSWHLPSV. S-palmitoyl cysteine; by host attachment occurs at residues Cys416 and Cys418. A (+)RNA virus helicase ATP-binding domain is found at 689–841; the sequence is DLINPPFHEF…HNICTRVLHK (153 aa). 720-727 is an a ribonucleoside 5'-triphosphate binding site; that stretch reads GVPGSGKS. The (+)RNA virus helicase C-terminal domain occupies 842–990; it reads SISRRCTLPV…LEEWQEEHDG (149 aa). The region spanning 1003 to 1325 is the Peptidase C9 domain; it reads DPFQNKAKVC…QKLSSMYACN (323 aa). The interval 1004-1023 is nucleolus localization signal; that stretch reads PFQNKAKVCWAKCLVQVLET. Cys1012 acts as the For cysteine protease nsP2 activity in catalysis. The Nuclear export signal signature appears at 1056–1065; the sequence is TRYYGVDLDS. His1081 acts as the For cysteine protease nsP2 activity in catalysis. The short motif at 1180 to 1184 is the Nuclear localization signal element; that stretch reads PHKRV. Positions 1332-1492 constitute a Macro domain; sequence CAPSYRVRRA…KIQEAIDRRT (161 aa). Asp1342, Asn1356, Gly1364, Gly1444, and Phe1446 together coordinate ADP-D-ribose. Zn(2+) contacts are provided by Cys1594, Cys1596, Cys1619, and Cys1637. Residues 1766–1803 are disordered; sequence VRKVATEPPSEPEAPIPAPRKRRTTSTTPPHNPGDFVP. The span at 1774–1783 shows a compositional bias: pro residues; that stretch reads PSEPEAPIPA. 2 consecutive short sequence motifs (FGDF; binding to host G3BP1) follow at residues 1820–1823 and 1841–1844; these read FGDL and FGDI. Residues 2222–2337 enclose the RdRp catalytic domain; the sequence is AVLETDIASF…GVRSDPLMAE (116 aa).

In terms of assembly, interacts with non-structural protein 3. Interacts with RNA-directed RNA polymerase nsP4. Interacts with protease nsP2. interacts with itself. As to quaternary structure, interacts with mRNA-capping enzyme nsP1. Interacts with host DDX1. Interacts with host DDX3. Interacts (via C-terminus) with host G3BP1; this interaction inhibits the formation of host stress granules on viral mRNAs and the nsp3-G3BP1 complexes bind viral RNAs and probably orchestrate the assembly of viral replication complexes. Interacts (via C-terminus) with host G3BP2; this interaction inhibits the formation of host stress granules on viral mRNAs and the nsp3-G3BP2 complexes bind viral RNAs and probably orchestrate the assembly of viral replication complexes. Interacts with mRNA-capping enzyme nsP1. Interacts with protease nsP2. interacts with itself. In terms of assembly, interacts with RNA-directed RNA polymerase nsP4. Interacts with mRNA-capping enzyme nsP1. Interacts with KPNA1/karyopherin-alpha1; this interaction probably allows the active transport of protease nsP2 into the host nucleus. It depends on Mg(2+) as a cofactor. The cofactor is Mn(2+). In terms of processing, specific enzymatic cleavages in vivo yield mature proteins. The processing of the polyprotein is temporally regulated. In early stages (1.7 hpi), P1234 is first cleaved in trans through its nsP2 protease activity, releasing P123' and nsP4, which associate to form the early replication complex. At the same time, P1234 is also cut at the nsP1/nsP2 site early in infection but with lower efficiency. After replication of the viral minus-strand RNAs (4 hpi), the polyproteins are cut at the nsP1/nsP2 and nsP2/nsP3 sites very efficiently, preventing accumulation of P123' and P1234 and allowing the formation of the late replication complex. NsP3'/nsP4 site is not cleaved anymore and P34 is produced rather than nsP4. Post-translationally, specific enzymatic cleavages in vivo yield mature proteins. The processing of the polyprotein is temporally regulated. In early stages (1.7 hpi), P123 is cleaved at the nsP1/nsP2 site with low efficiency. After replication of the viral minus-strand RNAs (4 hpi), the polyproteins are cut at the nsP1/nsP2 and nsP2/nsP3 sites very efficiently, preventing accumulation of P123 and allowing the formation of the late replication complex. Specific enzymatic cleavages in vivo yield mature proteins. The processing of the polyprotein is temporally regulated. In early stages (1.7 hpi), P123' is cleaved at the nsP1/nsP2 site with low efficiency. After replication of the viral minus-strand RNAs (4 hpi), the polyproteins are cut at the nsP1/nsP2 and nsP2/nsP3 sites very efficiently, preventing accumulation of P123' and allowing the formation of the late replication complex. In terms of processing, palmitoylated by host palmitoyltransferases ZDHHC2 and ZDHHC19. Post-translationally, phosphorylated by host on serines and threonines. Ubiquitinated; targets the protein for rapid degradation via the ubiquitin system. Nsp4 is present in extremely low quantities due to low frequency of translation through the amber stop-codon and the degradation by the ubiquitin pathway.

Its subcellular location is the host cytoplasmic vesicle membrane. The protein resides in the host cell membrane. The protein localises to the host cell projection. It is found in the host filopodium. It localises to the host nucleus. Its subcellular location is the host cytoplasm. The enzyme catalyses GTP + S-adenosyl-L-methionine = N(7)-methyl-GTP + S-adenosyl-L-homocysteine. It catalyses the reaction N(7)-methyl-GTP + L-histidyl-[protein] = N(tele)-(N(7)-methylguanosine 5'-phospho)-L-histidyl-[protein] + diphosphate. The catalysed reaction is N(tele)-(N(7)-methylguanosine 5'-phospho)-L-histidyl-[protein] + a 5'-end diphospho-(purine-ribonucleoside) in mRNA + H(+) = a 5'-end (N(7)-methyl 5'-triphosphoguanosine)-(purine-ribonucleoside) in mRNA + L-histidyl-[protein]. It carries out the reaction a 5'-end triphospho-ribonucleoside in mRNA + H2O = a 5'-end diphospho-ribonucleoside in mRNA + phosphate + H(+). The enzyme catalyses a ribonucleoside 5'-triphosphate + H2O = a ribonucleoside 5'-diphosphate + phosphate + H(+). It catalyses the reaction ATP + H2O = ADP + phosphate + H(+). The catalysed reaction is RNA(n) + a ribonucleoside 5'-triphosphate = RNA(n+1) + diphosphate. It carries out the reaction RNA(n) + ATP = RNA(n)-3'-adenine ribonucleotide + diphosphate. The enzyme catalyses 4-O-(ADP-D-ribosyl)-L-aspartyl-[protein] + H2O = L-aspartyl-[protein] + ADP-D-ribose + H(+). It catalyses the reaction 5-O-(ADP-D-ribosyl)-L-glutamyl-[protein] + H2O = L-glutamyl-[protein] + ADP-D-ribose + H(+). The catalysed reaction is ADP-alpha-D-ribose 1''-phosphate + H2O = ADP-D-ribose + phosphate. Inactive precursor of the viral replicase, which is activated by cleavages carried out by the viral protease nsP2. In terms of biological role, the early replication complex formed by the polyprotein P123 and nsP4 synthesizes minus-strand RNAs. As soon P123 is cleaved into mature proteins, the plus-strand RNAs synthesis begins. Its function is as follows. The early replication complex formed by the polyprotein P123' and nsP4 synthesizes minus-strand RNAs. Polyprotein P123' is a short-lived polyprotein that accumulates during early stage of infection. As soon P123' is cleaved into mature proteins, the plus-strand RNAs synthesis begins. Functionally, cytoplasmic capping enzyme that catalyzes two virus-specific reactions: methyltransferase and nsP1 guanylyltransferase. mRNA-capping is necessary since all viral RNAs are synthesized in the cytoplasm, and host capping enzymes are restricted to the nucleus. The enzymatic reaction involves a covalent link between 7-methyl-GMP and nsP1, whereas eukaryotic capping enzymes form a covalent complex only with GMP. nsP1 capping consists in the following reactions: GTP is first methylated into 7-methyl-GMP and then is covalently linked to nsP1 to form the m7GMp-nsP1 complex from which 7-methyl-GMP complex is transferred to the mRNA to create the cap structure. NsP1 is needed for the initiation of the minus-strand RNAs synthesis. Probably serves as a membrane anchor for the replication complex composed of nsP1-nsP4. Palmitoylated nsP1 is remodeling host cell cytoskeleton, and induces filopodium-like structure formation at the surface of the host cell. Multifunctional protein whose N-terminus is part of the RNA polymerase complex and displays NTPase, RNA triphosphatase and helicase activities. NTPase and RNA triphosphatase are involved in viral RNA capping and helicase keeps a check on the dsRNA replication intermediates. The C-terminus harbors a protease that specifically cleaves the polyproteins and releases the mature proteins. Required for the shutoff of minus-strand RNAs synthesis. Specifically inhibits the host IFN response by promoting the nuclear export of host STAT1. Also inhibits host transcription by inducing rapid proteasome-dependent degradation of POLR2A, a catalytic subunit of the RNAPII complex. The resulting inhibition of cellular protein synthesis serves to ensure maximal viral gene expression and to evade host immune response. In terms of biological role, seems to be essential for minus-strand RNAs and subgenomic 26S mRNAs synthesis. Displays mono-ADP-ribosylhydrolase activity. ADP-ribosylation is a post-translational modification that controls various processes of the host cell and the virus probably needs to revert it for optimal viral replication. Binds proteins of FXR family and sequesters them into the viral RNA replication complexes thereby inhibiting the formation of host stress granules on viral mRNAs. The nsp3'-FXR complexes bind viral RNAs and probably orchestrate the assembly of viral replication complexes, thanks to the ability of FXR family members to self-assemble and bind DNA. Its function is as follows. Seems to be essential for minus-strand RNAs and subgenomic 26S mRNAs synthesis. Displays mono-ADP-ribosylhydrolase activity. ADP-ribosylation is a post-translantional modification that controls various processes of the host cell and the virus probably needs to revert it for optimal viral replication. Binds proteins of G3BP family and sequesters them into the viral RNA replication complexes thereby inhibiting the formation of host stress granules on viral mRNAs. The nsp3-G3BP complexes bind viral RNAs and probably orchestrate the assembly of viral replication complexes, thanks to the ability of G3BP family members to self-assemble and bind DNA. Functionally, RNA dependent RNA polymerase. Replicates genomic and antigenomic RNA by recognizing replications specific signals. The early replication complex formed by the polyprotein P123 and nsP4 synthesizes minus-strand RNAs. The late replication complex composed of fully processed nsP1-nsP4 is responsible for the production of genomic and subgenomic plus-strand RNAs. The core catalytic domain of nsP4 also possesses terminal adenylyltransferase (TATase) activity that is probably involved in maintenance and repair of the poly(A) tail, an element required for replication of the viral genome. The protein is Polyprotein P1234 of Sagiyama virus (SAGV).